Consider the following 421-residue polypeptide: Proton extrusion protein PxcA (421 aa).

Positions 124–153 are disordered; sequence PTVHSSNPDDSQLMTSKNNSKPVPDPESDD. Polar residues predominate over residues 125-144; the sequence is TVHSSNPDDSQLMTSKNNSK. 4 consecutive transmembrane segments (helical) span residues 203–223, 298–318, 345–365, and 381–401; these read FVLL…SFIV, AIKN…LLIS, IIIL…WEVI, and FIFL…KYWI.

The protein belongs to the CemA family.

The protein resides in the cell inner membrane. Functionally, required for H(+) efflux immediately after light irradiation to form a rapid H(+) concentration gradient across the thylakoid membranes. Together with PxcL, contributes to transient H(+) uptake following dark to light transition. The protein is Proton extrusion protein PxcA of Synechococcus sp. (strain ATCC 27144 / PCC 6301 / SAUG 1402/1) (Anacystis nidulans).